The chain runs to 297 residues: HTH-type transcriptional regulator ArgP (297 aa).

Residues 4–60 (PDYRTLQALDAVIRERGFERAAQKLCITQSAVSQRIKQLENLFGQPLLVRTIPPRPT) enclose the HTH lysR-type domain. A DNA-binding region (H-T-H motif) is located at residues 21–40 (FERAAQKLCITQSAVSQRIK).

The protein belongs to the LysR transcriptional regulatory family. As to quaternary structure, homodimer.

In terms of biological role, controls the transcription of genes involved in arginine and lysine metabolism. The polypeptide is HTH-type transcriptional regulator ArgP (Pectobacterium carotovorum subsp. carotovorum (strain PC1)).